Reading from the N-terminus, the 326-residue chain is Interleukin-1-binding protein (326 aa).

The signal sequence occupies residues 1–18 (MSILPVIFLSIFFYSSFV). 3 Ig-like domains span residues 24 to 115 (PECI…LNLT), 122 to 212 (SNID…RIVK), and 221 to 322 (PSTM…KTVT). C48 and C99 form a disulfide bridge. N-linked (GlcNAc...) asparagine; by host glycosylation is found at N80, N103, and N113. Cysteines 143 and 194 form a disulfide. N206 and N237 each carry an N-linked (GlcNAc...) asparagine; by host glycan. The cysteines at positions 242 and 309 are disulfide-linked.

This sequence belongs to the interleukin-1 receptor family. In terms of assembly, interacts with mouse Il1b.

Its subcellular location is the secreted. In terms of biological role, may reduce the host inflammatory response by interacting with inteleukin-1 beta (Il1b) and thus decreasing the association between IL1B and its cellular receptor. The protein is Interleukin-1-binding protein (OPG201) of Vaccinia virus (strain Western Reserve) (VACV).